A 751-amino-acid polypeptide reads, in one-letter code: Lanosterol synthase erg7A (751 aa).

The tract at residues 1–22 is disordered; it reads MTGGPIASWRTAAQGHLTPDEN. Residues 147 to 189 form a PFTB 1 repeat; that stretch reads ATEIKRYLFARQHPEDGGWGLHIEAHSSVFGTCMNYVALRLIG. The active-site Proton donor is the D481. PFTB repeat units lie at residues 508 to 553, 585 to 625, and 634 to 675; these read LKDS…MIGY, KDKA…ASVG, and ARRG…VQTA.

This sequence belongs to the terpene cyclase/mutase family.

The protein localises to the lipid droplet. It localises to the endoplasmic reticulum membrane. It catalyses the reaction (S)-2,3-epoxysqualene = lanosterol. Its pathway is steroid metabolism; ergosterol biosynthesis. Functionally, lanosterol synthase; part of the third module of ergosterol biosynthesis pathway that includes the late steps of the pathway. ERG7A and ERG7B catalyze the cyclization of (S)-2,3 oxidosqualene to lanosterol, a reaction that forms the sterol core. The third module or late pathway involves the ergosterol synthesis itself through consecutive reactions that mainly occur in the endoplasmic reticulum (ER) membrane. Firstly, the squalene synthase erg9 catalyzes the condensation of 2 farnesyl pyrophosphate moieties to form squalene, which is the precursor of all steroids. Squalene synthase is crucial for balancing the incorporation of farnesyl diphosphate (FPP) into sterol and nonsterol isoprene synthesis. Secondly, squalene is converted into lanosterol by the consecutive action of the squalene epoxidase erg1 and the lanosterol synthase erg7. Then, the delta(24)-sterol C-methyltransferase erg6 methylates lanosterol at C-24 to produce eburicol. Eburicol is the substrate of the sterol 14-alpha demethylase encoded by cyp51A and cyp51B, to yield 4,4,24-trimethyl ergosta-8,14,24(28)-trienol. The C-14 reductase erg24 then reduces the C14=C15 double bond which leads to 4,4-dimethylfecosterol. A sequence of further demethylations at C-4, involving the C-4 demethylation complex containing the C-4 methylsterol oxidases erg25A or erg25B, the sterol-4-alpha-carboxylate 3-dehydrogenase erg26 and the 3-keto-steroid reductase erg27, leads to the production of fecosterol via 4-methylfecosterol. The C-8 sterol isomerase erg2 then catalyzes the reaction which results in unsaturation at C-7 in the B ring of sterols and thus converts fecosterol to episterol. The sterol-C5-desaturase erg3B then catalyzes the introduction of a C-5 double bond in the B ring to produce 5-dehydroepisterol. The 2 other sterol-C5-desaturases, erg3A and erg3C, seem to be less important in ergosterol biosynthesis. The C-22 sterol desaturase erg5 further converts 5-dehydroepisterol into ergosta-5,7,22,24(28)-tetraen-3beta-ol by forming the C-22(23) double bond in the sterol side chain. Finally, ergosta-5,7,22,24(28)-tetraen-3beta-ol is substrate of the C-24(28) sterol reductases erg4A and erg4B to produce ergosterol. Possible alternative sterol biosynthetic pathways might exist from fecosterol to ergosterol, depending on the activities of the erg3 isoforms. The sequence is that of Lanosterol synthase erg7A from Aspergillus fumigatus (strain ATCC MYA-4609 / CBS 101355 / FGSC A1100 / Af293) (Neosartorya fumigata).